The chain runs to 127 residues: Ribosome-binding factor A (127 aa).

Belongs to the RbfA family. As to quaternary structure, monomer. Binds 30S ribosomal subunits, but not 50S ribosomal subunits or 70S ribosomes.

Its subcellular location is the cytoplasm. Functionally, one of several proteins that assist in the late maturation steps of the functional core of the 30S ribosomal subunit. Associates with free 30S ribosomal subunits (but not with 30S subunits that are part of 70S ribosomes or polysomes). Required for efficient processing of 16S rRNA. May interact with the 5'-terminal helix region of 16S rRNA. The protein is Ribosome-binding factor A of Rickettsia typhi (strain ATCC VR-144 / Wilmington).